We begin with the raw amino-acid sequence, 123 residues long: Small ribosomal subunit protein uS13 (123 aa).

This sequence belongs to the universal ribosomal protein uS13 family. As to quaternary structure, part of the 30S ribosomal subunit. Forms a loose heterodimer with protein S19. Forms two bridges to the 50S subunit in the 70S ribosome.

In terms of biological role, located at the top of the head of the 30S subunit, it contacts several helices of the 16S rRNA. In the 70S ribosome it contacts the 23S rRNA (bridge B1a) and protein L5 of the 50S subunit (bridge B1b), connecting the 2 subunits; these bridges are implicated in subunit movement. Contacts the tRNAs in the A and P-sites. The protein is Small ribosomal subunit protein uS13 of Anaplasma marginale (strain St. Maries).